Here is a 338-residue protein sequence, read N- to C-terminus: Nucleoid-associated protein PA14_59050 (338 aa).

The protein belongs to the YejK family.

It localises to the cytoplasm. It is found in the nucleoid. The sequence is that of Nucleoid-associated protein PA14_59050 from Pseudomonas aeruginosa (strain UCBPP-PA14).